The chain runs to 510 residues: 2,3-bisphosphoglycerate-independent phosphoglycerate mutase (510 aa).

Mn(2+) contacts are provided by D13 and S63. Catalysis depends on S63, which acts as the Phosphoserine intermediate. Residues H124, 154-155 (RD), R186, R192, 262-265 (RADR), and K334 each bind substrate. 5 residues coordinate Mn(2+): D401, H405, D442, H443, and H461.

It belongs to the BPG-independent phosphoglycerate mutase family. Monomer. Mn(2+) is required as a cofactor.

The enzyme catalyses (2R)-2-phosphoglycerate = (2R)-3-phosphoglycerate. The protein operates within carbohydrate degradation; glycolysis; pyruvate from D-glyceraldehyde 3-phosphate: step 3/5. In terms of biological role, catalyzes the interconversion of 2-phosphoglycerate and 3-phosphoglycerate. The sequence is that of 2,3-bisphosphoglycerate-independent phosphoglycerate mutase from Vibrio cholerae serotype O1 (strain ATCC 39541 / Classical Ogawa 395 / O395).